A 756-amino-acid chain; its full sequence is NADP-dependent malic enzyme (756 aa).

The tract at residues 1 to 428 is malic enzyme; the sequence is MTEQLRQAAL…KLTQFVYKTS (428 aa). Tyrosine 39 (proton donor) is an active-site residue. Residue lysine 94 is the Proton acceptor of the active site. A divalent metal cation is bound by residues glutamate 136, aspartate 137, and aspartate 162. NADP(+)-binding positions include 195 to 198, asparagine 288, and asparagine 320; that span reads AGAA. Positions 429-756 are phosphate acetyltransferase; the sequence is LFMRPIFSQA…AYAAVKAQQE (328 aa).

In the N-terminal section; belongs to the malic enzymes family. It in the C-terminal section; belongs to the phosphate acetyltransferase and butyryltransferase family. Mg(2+) serves as cofactor. Requires Mn(2+) as cofactor.

The catalysed reaction is (S)-malate + NADP(+) = pyruvate + CO2 + NADPH. It carries out the reaction oxaloacetate + H(+) = pyruvate + CO2. This chain is NADP-dependent malic enzyme (maeB), found in Haemophilus influenzae (strain ATCC 51907 / DSM 11121 / KW20 / Rd).